The sequence spans 347 residues: Transcription factor JunB (347 aa).

Residues Lys4, Lys33, and Lys36 each participate in a glycyl lysine isopeptide (Lys-Gly) (interchain with G-Cter in SUMO2) cross-link. The tract at residues 51–73 (KAPGARGPGPEGGGGGSYFSGQG) is disordered. Over residues 56 to 68 (RGPGPEGGGGGSY) the composition is skewed to gly residues. Residue Lys81 forms a Glycyl lysine isopeptide (Lys-Gly) (interchain with G-Cter in SUMO2) linkage. Phosphothreonine occurs at positions 102 and 104. Ser117 bears the Phosphoserine mark. Lys141 participates in a covalent cross-link: Glycyl lysine isopeptide (Lys-Gly) (interchain with G-Cter in SUMO2). The span at 239–253 (FKEEPQTVPEARSRD) shows a compositional bias: basic and acidic residues. Residues 239–260 (FKEEPQTVPEARSRDATPPVSP) are disordered. Lys240 bears the N6-acetyllysine; alternate mark. A Glycyl lysine isopeptide (Lys-Gly) (interchain with G-Cter in SUMO1); alternate cross-link involves residue Lys240. A Glycyl lysine isopeptide (Lys-Gly) (interchain with G-Cter in SUMO2); alternate cross-link involves residue Lys240. Position 251 is a phosphoserine (Ser251). Thr255 carries the post-translational modification Phosphothreonine. Position 259 is a phosphoserine (Ser259). The segment at 268–295 (RIKVERKRLRNRLAATKCRKRKLERIAR) is basic motif. A bZIP domain is found at 268–331 (RIKVERKRLR…AQLKQKVMTH (64 aa)). A leucine-zipper region spans residues 296–324 (LEDKVKTLKAENAGLSSTAGLLREQVAQL). A Glycyl lysine isopeptide (Lys-Gly) (interchain with G-Cter in SUMO2) cross-link involves residue Lys343.

It belongs to the bZIP family. Jun subfamily. In terms of assembly, binds DNA as a homodimer or as a heterodimer with another member of the Jun/Fos family. Component of an AP-1 transcription factor complex composed of JUN-FOS heterodimers composed of JUN-FOS heterodimers. As part of the AP-1 transcription factor complex, forms heterodimers with FOSB, thereby binding to the AP-1 consensus sequence and stimulating transcription. Interacts with ITCH (via its WW domains). Ubiquitinated by ITCH, leading to its degradation.

Its subcellular location is the nucleus. In terms of biological role, transcription factor involved in regulating gene activity following the primary growth factor response. Binds to the DNA sequence 5'-TGA[GC]TCA-3'. Heterodimerizes with proteins of the FOS family to form an AP-1 transcription complex, thereby enhancing its DNA binding activity to an AP-1 consensus sequence and its transcriptional activity. This chain is Transcription factor JunB (JUNB), found in Homo sapiens (Human).